The chain runs to 914 residues: Dynamin-2A (914 aa).

At Met-1 the chain carries N-acetylmethionine. One can recognise a Dynamin-type G domain in the interval 35-303 (PATFLNVVAL…IRSRMKLRLP (269 aa)). Residues 45–52 (GNVGAGKS) are G1 motif. Residue 45–52 (GNVGAGKS) coordinates GTP. Residues 71 to 73 (ATR) form a G2 motif region. The interval 143–146 (DLPG) is G3 motif. Residues 143–147 (DLPGL) and 204–207 (GKID) each bind GTP. The interval 204–207 (GKID) is G4 motif. The interval 238 to 241 (AVIG) is G5 motif. Positions 507-522 (RREEELKGRSSKKGQD) are enriched in basic and acidic residues. Disordered regions lie at residues 507–570 (RREE…TAGP) and 629–648 (PEDE…NGPD). Residues 523–535 (AEQSLLSRATSPQ) are compositionally biased toward polar residues. Composition is skewed to basic and acidic residues over residues 547–560 (SMKD…KETP) and 634–645 (EKSKSSKDKKAN). The region spanning 572-696 (GEITAGYLMK…WINKLQKVIQ (125 aa)) is the PH domain. The 94-residue stretch at 730 to 823 (LRWMSQEVRG…QLSIHDNRAA (94 aa)) folds into the GED domain. The stretch at 781-805 (NERIESLIQEDQNVKRRRERYQKQS) forms a coiled coil. The tract at residues 821–914 (RAAAASSYSD…PPPTGSAYRY (94 aa)) is disordered. Polar residues-rich tracts occupy residues 826–839 (SSYS…SSPR) and 852–866 (AFNS…SLSK).

Belongs to the TRAFAC class dynamin-like GTPase superfamily. Dynamin/Fzo/YdjA family. Binds PtdIns3P. Interacts with SH3P3 (via SH3 domain) and (via C-terminus) with GAMMA-ADR. May homooligomerize or heterooligomerize.

The protein localises to the cytoplasm. The protein resides in the cytosol. It is found in the golgi apparatus membrane. Its subcellular location is the cytoskeleton. It localises to the phragmoplast. The protein localises to the cytoplasmic vesicle. The protein resides in the clathrin-coated vesicle. It catalyses the reaction GTP + H2O = GDP + phosphate + H(+). With respect to regulation, increased GTPase activity in the presence of phosphatidic acid. Its function is as follows. Microtubule-associated force-producing protein involved in clathrin-mediated vesicle trafficking from the trans-Golgi network to the central vacuole. Able to bind and hydrolyze GTP. Binds specifically to phosphatidylinositol 3-phosphate (PtdIns3P). This is Dynamin-2A (DRP2A) from Arabidopsis thaliana (Mouse-ear cress).